The primary structure comprises 238 residues: Aspartate/glutamate leucyltransferase (238 aa).

Belongs to the R-transferase family. Bpt subfamily.

The protein localises to the cytoplasm. The enzyme catalyses N-terminal L-glutamyl-[protein] + L-leucyl-tRNA(Leu) = N-terminal L-leucyl-L-glutamyl-[protein] + tRNA(Leu) + H(+). It catalyses the reaction N-terminal L-aspartyl-[protein] + L-leucyl-tRNA(Leu) = N-terminal L-leucyl-L-aspartyl-[protein] + tRNA(Leu) + H(+). In terms of biological role, functions in the N-end rule pathway of protein degradation where it conjugates Leu from its aminoacyl-tRNA to the N-termini of proteins containing an N-terminal aspartate or glutamate. This is Aspartate/glutamate leucyltransferase from Nitrosococcus oceani (strain ATCC 19707 / BCRC 17464 / JCM 30415 / NCIMB 11848 / C-107).